The sequence spans 371 residues: Putative glutamate--cysteine ligase 2 (371 aa).

The protein belongs to the glutamate--cysteine ligase type 2 family. YbdK subfamily. In terms of assembly, homodimer.

It carries out the reaction L-cysteine + L-glutamate + ATP = gamma-L-glutamyl-L-cysteine + ADP + phosphate + H(+). Functionally, ATP-dependent carboxylate-amine ligase which exhibits weak glutamate--cysteine ligase activity. In Cronobacter sakazakii (strain ATCC BAA-894) (Enterobacter sakazakii), this protein is Putative glutamate--cysteine ligase 2.